The sequence spans 143 residues: Large ribosomal subunit protein uL15 (143 aa).

A disordered region spans residues 1–51; sequence MRLNSIAPAPGSRPSAKRVGRGIGSGLGKTAGRGHKGQKARAGGYHKVGFE. Over residues 21 to 31 the composition is skewed to gly residues; it reads RGIGSGLGKTA.

The protein belongs to the universal ribosomal protein uL15 family. Part of the 50S ribosomal subunit.

Binds to the 23S rRNA. This chain is Large ribosomal subunit protein uL15, found in Thioalkalivibrio sulfidiphilus (strain HL-EbGR7).